A 233-amino-acid chain; its full sequence is Large ribosomal subunit protein uL3 (233 aa).

The tract at residues 145–172 (FGSQRASHGNSRSHRVPGSIGQAQDPGR) is disordered. Q168 is modified (N5-methylglutamine).

It belongs to the universal ribosomal protein uL3 family. As to quaternary structure, part of the 50S ribosomal subunit. Forms a cluster with proteins L14 and L19. Post-translationally, methylated by PrmB.

Its function is as follows. One of the primary rRNA binding proteins, it binds directly near the 3'-end of the 23S rRNA, where it nucleates assembly of the 50S subunit. The sequence is that of Large ribosomal subunit protein uL3 from Bordetella petrii (strain ATCC BAA-461 / DSM 12804 / CCUG 43448).